The chain runs to 118 residues: Ribosome-binding factor A (118 aa).

Belongs to the RbfA family. Monomer. Binds 30S ribosomal subunits, but not 50S ribosomal subunits or 70S ribosomes.

It localises to the cytoplasm. One of several proteins that assist in the late maturation steps of the functional core of the 30S ribosomal subunit. Associates with free 30S ribosomal subunits (but not with 30S subunits that are part of 70S ribosomes or polysomes). Required for efficient processing of 16S rRNA. May interact with the 5'-terminal helix region of 16S rRNA. The polypeptide is Ribosome-binding factor A (Streptococcus pyogenes serotype M1).